A 166-amino-acid chain; its full sequence is MPFERFVQTGRIAKASAGPLKGRLVAIVDVIDQNRVLVDGPLTGVPRQEYRLNNLHLTKYRIKFPYTAPTRIVRKAWTESDLKAQWKVSPWSVKAQNICKRSSLNDFDRFKLRYAKRQRNKLLTIAFNTLKKRTKADGTPRVLKKDRRERLRAEKAKGGKKAAAKK.

Positions 135 to 166 (KADGTPRVLKKDRRERLRAEKAKGGKKAAAKK) are disordered. The span at 146-157 (DRRERLRAEKAK) shows a compositional bias: basic and acidic residues.

Belongs to the eukaryotic ribosomal protein eL14 family.

The sequence is that of Large ribosomal subunit protein eL14 (RpL14) from Drosophila melanogaster (Fruit fly).